Reading from the N-terminus, the 177-residue chain is 3-hydroxydecanoyl-[acyl-carrier-protein] dehydratase (177 aa).

His76 is a catalytic residue.

The protein belongs to the thioester dehydratase family. FabA subfamily. As to quaternary structure, homodimer.

The protein localises to the cytoplasm. The enzyme catalyses a (3R)-hydroxyacyl-[ACP] = a (2E)-enoyl-[ACP] + H2O. It carries out the reaction (3R)-hydroxydecanoyl-[ACP] = (2E)-decenoyl-[ACP] + H2O. It catalyses the reaction (2E)-decenoyl-[ACP] = (3Z)-decenoyl-[ACP]. The protein operates within lipid metabolism; fatty acid biosynthesis. Its function is as follows. Necessary for the introduction of cis unsaturation into fatty acids. Catalyzes the dehydration of (3R)-3-hydroxydecanoyl-ACP to E-(2)-decenoyl-ACP and then its isomerization to Z-(3)-decenoyl-ACP. Can catalyze the dehydratase reaction for beta-hydroxyacyl-ACPs with saturated chain lengths up to 16:0, being most active on intermediate chain length. This Haemophilus influenzae (strain PittGG) protein is 3-hydroxydecanoyl-[acyl-carrier-protein] dehydratase.